The primary structure comprises 279 residues: Tryptophan synthase alpha chain (279 aa).

Catalysis depends on proton acceptor residues E50 and D61.

It belongs to the TrpA family. Tetramer of two alpha and two beta chains.

It carries out the reaction (1S,2R)-1-C-(indol-3-yl)glycerol 3-phosphate + L-serine = D-glyceraldehyde 3-phosphate + L-tryptophan + H2O. It participates in amino-acid biosynthesis; L-tryptophan biosynthesis; L-tryptophan from chorismate: step 5/5. In terms of biological role, the alpha subunit is responsible for the aldol cleavage of indoleglycerol phosphate to indole and glyceraldehyde 3-phosphate. The chain is Tryptophan synthase alpha chain from Sinorhizobium medicae (strain WSM419) (Ensifer medicae).